We begin with the raw amino-acid sequence, 210 residues long: Probable nicotinate-nucleotide adenylyltransferase (210 aa).

Belongs to the NadD family.

It carries out the reaction nicotinate beta-D-ribonucleotide + ATP + H(+) = deamido-NAD(+) + diphosphate. It participates in cofactor biosynthesis; NAD(+) biosynthesis; deamido-NAD(+) from nicotinate D-ribonucleotide: step 1/1. Its function is as follows. Catalyzes the reversible adenylation of nicotinate mononucleotide (NaMN) to nicotinic acid adenine dinucleotide (NaAD). This chain is Probable nicotinate-nucleotide adenylyltransferase, found in Streptococcus pyogenes serotype M18 (strain MGAS8232).